Reading from the N-terminus, the 284-residue chain is Putative thiosulfate sulfurtransferase SseB (284 aa).

2 consecutive Rhodanese domains span residues 20 to 138 and 169 to 280; these read AGDP…SIET and GAGG…RPVG. Arg183 is a binding site for substrate. The active-site Cysteine persulfide intermediate is the Cys241.

It catalyses the reaction thiosulfate + hydrogen cyanide = thiocyanate + sulfite + 2 H(+). The chain is Putative thiosulfate sulfurtransferase SseB (sseB) from Mycobacterium tuberculosis (strain CDC 1551 / Oshkosh).